The sequence spans 501 residues: MAMANLARRKGYSLLSSETLRYSFSLRSRAFASGSDENDVVIIGGGPGGYVAAIKAAQLGFKTTCIEKRGALGGTCLNVGCIPSKALLHSSHMYHEAKHSFANHGVKVSNVEIDLAAMMGQKDKAVSNLTRGIEGLFKKNKVTYVKGYGKFVSPSEISVDTIEGENTVVKGKHIIIATGSDVKSLPGVTIDEKKIVSSTGALALSEIPKKLVVIGAGYIGLEMGSVWGRIGSEVTVVEFASEIVPTMDAEIRKQFQRSLEKQGMKFKLKTKVVGVDTSGDGVKLTVEPSAGGEQTIIEADVVLVSAGRTPFTSGLNLDKIGVETDKLGRILVNERFSTNVSGVYAIGDVIPGPMLAHKAEEDGVACVEYLAGKVGHVDYDKVPGVVYTNPEVASVGKTEEQVKETGVEYRVGKFPFMANSRAKAIDNAEGLVKIIAEKETDKILGVHIMAPNAGELIHEAAIALQYDASSEDIARVCHAHPTMSEAIKEAAMATYDKPIHI.

A mitochondrion-targeting transit peptide spans 1–31; that stretch reads MAMANLARRKGYSLLSSETLRYSFSLRSRAF. FAD-binding positions include 67–76, K85, G149, and 178–180; these read EKRGALGGTC and TGS. A disulfide bridge connects residues C76 and C81. Residues 215–222, E238, V272, and G307 contribute to the NAD(+) site; that span reads GAGYIGLE. Residues D348 and 354-357 each bind FAD; that span reads MLAH. Catalysis depends on H480, which acts as the Proton acceptor.

Belongs to the class-I pyridine nucleotide-disulfide oxidoreductase family. In terms of assembly, homodimer. It depends on FAD as a cofactor.

It is found in the mitochondrion matrix. It carries out the reaction N(6)-[(R)-dihydrolipoyl]-L-lysyl-[protein] + NAD(+) = N(6)-[(R)-lipoyl]-L-lysyl-[protein] + NADH + H(+). Functionally, lipoamide dehydrogenase is a component of the glycine cleavage system as well as of the alpha-ketoacid dehydrogenase complexes. The pyruvate dehydrogenase complex contains multiple copies of three enzymatic components: pyruvate dehydrogenase (E1), dihydrolipoamide acetyltransferase (E2) and lipoamide dehydrogenase (E3). This Pisum sativum (Garden pea) protein is Dihydrolipoyl dehydrogenase, mitochondrial (LPD).